Consider the following 386-residue polypeptide: Acyl-CoA ligase lcsD (386 aa).

Residues Glu62–Gln132 are SBD1. Ala107 to Lys115 lines the ATP pocket. Residues Gly133–Tyr195 are SBD2. Residue Thr137 coordinates substrate. 2 residues coordinate ATP: Asp216 and Arg235. CoA is bound by residues Arg243–Leu245 and His313–Gly316. Lys331 is a binding site for ATP. Residues Arg352–Asp386 form a disordered region.

Belongs to the ATP-dependent AMP-binding enzyme family.

It participates in secondary metabolite biosynthesis. In terms of biological role, acyl-CoA ligase; part of the gene cluster that mediates the biosynthesis of the lipopeptide antibiotics leucinostatins that show extensive biological activities, including antimalarial, antiviral, antibacterial, antifungal, and antitumor activities, as well as phytotoxic. Leucinostatin A contains nine amino acid residues, including the unusual amino acid 4-methyl-L-proline (MePro), 2-amino-6-hydroxy-4-methyl-8-oxodecanoic acid (AHyMeOA), 3-hydroxyleucine (HyLeu), alpha-aminoisobutyric acid (AIB), beta-Ala, a 4-methylhex-2-enoic acid at the N-terminus as well as a N1,N1-dimethylpropane-1,2-diamine (DPD) at the C-terminus. The biosynthesis of leucinostatins is probably initiated with the assembly of 4-methylhex-2-enoic acid by a reducing PKS. Two reducing polyketide synthases, lcsB and lcsC, have been identified in the cluster and it is not clear which is the one that assembles 4-methylhex-2-enoic acid since both contain KS, AT, DH, cMT, ER, KR and ACP domains. The polyketide residue might be transferred to the NRPS lcsA, mediated by two additional enzymes, the acyl-CoA ligase lcsD and the thioesterase lcsE. The linear polyketide carboxylic acid, which is released from PKS, is converted to a CoA thioester by lcsD, and then lcsE hydrolyzes the thiol bond and shuttles the polyketide intermediate to lcsA. The C domain of the first module catalyzed the condensation of 4-methylhex-2-enoic acid and MePro carried by domain A1, followed by successive condensations of nine amino acids to trigger the elongation of the linear peptide. A5 and A6 domains of lcsA are proposed to incorporate leucine, A2 AHyMeOA, and A3 incorporates HyLeu. A4, A7 and A8 incorporate AIB. The AHyMeOA in leucinostatin A activated by the A2 might be produced by the second PKS (lcsB or lcsC) present within the cluster. The MePro is probably produced via leucine cyclization and may originate from a separate pathway, independent of the cluster. Another nonproteinogenic amino acid, beta-Ala, could be produced by an aspartic acid decarboxylase also localized outside of the cluster. Two candidates are VFPBJ_01400 and VFPBJ_10476. The final peptide scaffold may be released by the NAD(P)H-dependent thioester reductase (TE) at the C-terminal region of lcsA. Transamination of the lcsA product by the transaminase lcsP may produce DPD at the C-terminus. Further hydroxylation steps performed alternatively by the cytochrome P450 monooxygenases lcsI, lcsK and lcsN then yield the non-methylated leucinostatins precursor. It is also possible that leucines can be hydroxylated prior to their incorporation into the peptide. Varying extents of methylation then lead to the formation of leucinostatins A and B. This is Acyl-CoA ligase lcsD from Purpureocillium lilacinum (Paecilomyces lilacinus).